The primary structure comprises 339 residues: Dihydroorotase (339 aa).

2 residues coordinate Zn(2+): His12 and His14. Substrate is bound by residues 14 to 16 and Asn40; that span reads HVR. Zn(2+)-binding residues include Lys94, His133, His167, and Asp239. Lys94 carries the N6-carboxylysine modification. Residue His133 coordinates substrate. The active site involves Asp239. The substrate site is built by His243 and Ala255.

This sequence belongs to the metallo-dependent hydrolases superfamily. DHOase family. Class II DHOase subfamily. In terms of assembly, homodimer. The cofactor is Zn(2+).

It catalyses the reaction (S)-dihydroorotate + H2O = N-carbamoyl-L-aspartate + H(+). The protein operates within pyrimidine metabolism; UMP biosynthesis via de novo pathway; (S)-dihydroorotate from bicarbonate: step 3/3. Functionally, catalyzes the reversible cyclization of carbamoyl aspartate to dihydroorotate. This is Dihydroorotase from Helicobacter acinonychis (strain Sheeba).